A 122-amino-acid chain; its full sequence is Small ribosomal subunit protein uS13 (122 aa).

Residues 97-122 (PVRGQRTKTNARTRKGPARTVAGKKK) are disordered.

It belongs to the universal ribosomal protein uS13 family. As to quaternary structure, part of the 30S ribosomal subunit. Forms a loose heterodimer with protein S19. Forms two bridges to the 50S subunit in the 70S ribosome.

Located at the top of the head of the 30S subunit, it contacts several helices of the 16S rRNA. In the 70S ribosome it contacts the 23S rRNA (bridge B1a) and protein L5 of the 50S subunit (bridge B1b), connecting the 2 subunits; these bridges are implicated in subunit movement. Contacts the tRNAs in the A and P-sites. In Pelobacter propionicus (strain DSM 2379 / NBRC 103807 / OttBd1), this protein is Small ribosomal subunit protein uS13.